The primary structure comprises 75 residues: Brevinin-2ISc (75 aa).

The signal sequence occupies residues 1–22 (MFTLKKSLLLLFFLGTISLSLC). A propeptide spans 23–40 (EEERDADEDEGEMTEEEV) (removed in mature form). A disulfide bridge links Cys69 with Cys75.

Expressed by the skin glands.

It is found in the secreted. Its function is as follows. Has antimicrobial activity against Gram-negative bacterium E.coli ATCC 8739 (MIC=50 ug) and against Gram positive bacteria S.aureus ATCC 6538 (MIC=25 ug). Has no activity against methicillin-resistant S.aureus ATCC 43300, B.subtilis ATCC 6633 and against fungus C.albicans ATCC 90028. This chain is Brevinin-2ISc, found in Odorrana ishikawae (Ishikawa's frog).